The chain runs to 273 residues: Dermonecrotic toxin LhSicTox-alphaIA1ii (273 aa).

The active site involves H5. Positions 25 and 27 each coordinate Mg(2+). Catalysis depends on H41, which acts as the Nucleophile. 2 disulfides stabilise this stretch: C45–C51 and C47–C190. D85 serves as a coordination point for Mg(2+).

The protein belongs to the arthropod phospholipase D family. Class II subfamily. Mg(2+) serves as cofactor. As to expression, expressed by the venom gland.

It localises to the secreted. It catalyses the reaction an N-(acyl)-sphingosylphosphocholine = an N-(acyl)-sphingosyl-1,3-cyclic phosphate + choline. The catalysed reaction is an N-(acyl)-sphingosylphosphoethanolamine = an N-(acyl)-sphingosyl-1,3-cyclic phosphate + ethanolamine. The enzyme catalyses a 1-acyl-sn-glycero-3-phosphocholine = a 1-acyl-sn-glycero-2,3-cyclic phosphate + choline. It carries out the reaction a 1-acyl-sn-glycero-3-phosphoethanolamine = a 1-acyl-sn-glycero-2,3-cyclic phosphate + ethanolamine. Functionally, dermonecrotic toxins cleave the phosphodiester linkage between the phosphate and headgroup of certain phospholipids (sphingolipid and lysolipid substrates), forming an alcohol (often choline) and a cyclic phosphate. This toxin acts on sphingomyelin (SM). It may also act on ceramide phosphoethanolamine (CPE), lysophosphatidylcholine (LPC) and lysophosphatidylethanolamine (LPE), but not on lysophosphatidylserine (LPS), and lysophosphatidylglycerol (LPG). It acts by transphosphatidylation, releasing exclusively cyclic phosphate products as second products. Induces dermonecrosis, hemolysis, increased vascular permeability, edema, inflammatory response, and platelet aggregation. This chain is Dermonecrotic toxin LhSicTox-alphaIA1ii, found in Loxosceles hirsuta (Recluse spider).